The chain runs to 278 residues: Trehalose monomycolate transport factor A (278 aa).

A topological domain (periplasmic) is located at residue Met-1. Residues 2-22 traverse the membrane as a helical segment; the sequence is VPLWFTLSALCFVGAAVLLYV. The Cytoplasmic portion of the chain corresponds to 23-278; the sequence is DIDRRRGLGR…NGREASHFQR (256 aa). A disordered region spans residues 200 to 278; sequence PPVPQNGSQA…NGREASHFQR (79 aa). Residues 269 to 278 are compositionally biased toward basic and acidic residues; that stretch reads NGREASHFQR.

As to quaternary structure, monomer. Interacts (via N-terminus) with MmpL3; active trehalose monomycolate (TMM) biosynthesis is not required for the complex formation. Interacts with MSMEG_5308.

Its subcellular location is the cell inner membrane. The protein localises to the cell septum. It is found in the cell tip. Functionally, required for MmpL3-dependent trehalose monomycolate (TMM) transport to the cell wall. Required for growth and cell elongation. The chain is Trehalose monomycolate transport factor A from Mycolicibacterium smegmatis (strain ATCC 700084 / mc(2)155) (Mycobacterium smegmatis).